We begin with the raw amino-acid sequence, 261 residues long: Kallikrein-1 (261 aa).

An N-terminal signal peptide occupies residues 1–18 (MWFLILFLALSLGRNDAA). Positions 19-24 (PPVQSR) are cleaved as a propeptide — activation peptide. The Peptidase S1 domain occupies 25 to 258 (VVGGYNCEMN…FTPWIKEVMK (234 aa)). 5 disulfides stabilise this stretch: C31–C173, C50–C66, C152–C219, C184–C198, and C209–C234. The active-site Charge relay system is H65. N-linked (GlcNAc...) asparagine glycosylation is present at N108. D120 serves as the catalytic Charge relay system. S213 serves as the catalytic Charge relay system.

It belongs to the peptidase S1 family. Kallikrein subfamily. High levels in pancreas, submaxillary and parotid glands, spleen, and kidney.

The catalysed reaction is Preferential cleavage of Arg-|-Xaa bonds in small molecule substrates. Highly selective action to release kallidin (lysyl-bradykinin) from kininogen involves hydrolysis of Met-|-Xaa or Leu-|-Xaa.. The chain is Kallikrein-1 (Ngfg) from Rattus norvegicus (Rat).